Reading from the N-terminus, the 694-residue chain is Heat shock protein homolog SSE1 (694 aa).

The segment at 671–694 (AQRSADSEAKKDATPEGDAQMDLD) is disordered. Over residues 675–684 (ADSEAKKDAT) the composition is skewed to basic and acidic residues.

The protein belongs to the heat shock protein 70 family.

The protein resides in the cytoplasm. This is Heat shock protein homolog SSE1 (SSE1) from Candida glabrata (strain ATCC 2001 / BCRC 20586 / JCM 3761 / NBRC 0622 / NRRL Y-65 / CBS 138) (Yeast).